The sequence spans 231 residues: Sugar fermentation stimulation protein homolog (231 aa).

Belongs to the SfsA family.

This is Sugar fermentation stimulation protein homolog from Geotalea uraniireducens (strain Rf4) (Geobacter uraniireducens).